The sequence spans 360 residues: MEGNGCGGSGATPRGVVGMHWAPVVTSPPSPQPPFLPPAPCRPDVQMQQQGGLTCLKLGKRPCFWGGDGAGQVAQGSGGGGGGGGGGSADQGKRKEKAATAVPVVPRCQVEGCDITLQGVKEYHRRHKVCEVHAKAPRVVVHGTEQRFCQQCSRFHVLAEFDDAKKSCRRRLAGHNERRRRSNASEAMARGSAHPHGMPVLGHGFPPYGLPTSSAGALSLLSSARATGPWLMPTPDISARSSAALDELIAENRAALLSWQFFSDRQPPPAGRPTGRSPGSETAGGWHAHLQARPPPPGAGGQHENQSGHVTLDLMQATTAAGGSGAPFRPVPARPPKEGGDAGCTSDAWTPSPMEGARVV.

Over residues 74–89 (AQGSGGGGGGGGGGSA) the composition is skewed to gly residues. The disordered stretch occupies residues 74–98 (AQGSGGGGGGGGGGSADQGKRKEKA). Residues 105-182 (VPRCQVEGCD…AGHNERRRRS (78 aa)) form an SBP-type zinc finger. Residues cysteine 108, cysteine 113, cysteine 130, histidine 133, cysteine 149, cysteine 152, histidine 156, and cysteine 168 each coordinate Zn(2+). Residues 165 to 181 (KKSCRRRLAGHNERRRR) carry the Bipartite nuclear localization signal motif. Residues 172–182 (LAGHNERRRRS) are compositionally biased toward basic residues. 3 disordered regions span residues 172–196 (LAGH…AHPH), 261–306 (FFSD…HENQ), and 318–360 (TTAA…ARVV).

Expressed in young panicles.

The protein localises to the nucleus. Its function is as follows. Trans-acting factor that binds specifically to the consensus nucleotide sequence 5'-TNCGTACAA-3'. May be involved in panicle development. In Oryza sativa subsp. japonica (Rice), this protein is Squamosa promoter-binding-like protein 7 (SPL7).